The sequence spans 459 residues: Glycosyl hydrolase family 109 protein 1 (459 aa).

A signal peptide (tat-type signal) is located at residues M1–A31. NAD(+)-binding positions include E64–R65, D86, W135–H138, E155–V156, and N184. Substrate is bound by residues Y213, R232, Y244 to H247, and Y326. Y244 contributes to the NAD(+) binding site.

It belongs to the Gfo/Idh/MocA family. Glycosyl hydrolase 109 subfamily. NAD(+) serves as cofactor. Post-translationally, predicted to be exported by the Tat system. The position of the signal peptide cleavage has not been experimentally proven.

Glycosidase. This chain is Glycosyl hydrolase family 109 protein 1, found in Shewanella sp. (strain MR-4).